Reading from the N-terminus, the 250-residue chain is MEDINFASLAPRHGSRPFMGNWQDIGTSNMSGGAFSWGSLWSGIKNFGSTVKNYGSKAWNSSTGQMLRDKLKEQNFQQKVVDGLASGISGVVDLANQAVQNKINSKLDPRPPVEEPPPAVETVSPEGRGEKRPRPDREETLVTQIDEPPSYEEALKQGLPTTRPIAPMATGVLGQHTPVTLDLPPPADTQQKPVLPGPTAVVVTRPSRASLRRAASGPRSLRPVASGNWQSTLNSIVGLGVQSLKRRRCF.

A propeptide spanning residues 1-33 (MEDINFASLAPRHGSRPFMGNWQDIGTSNMSGG) is cleaved from the precursor. Residues 34 to 54 (AFSWGSLWSGIKNFGSTVKNY) are amphipathic alpha-helix essential for membrane lytic activity. The involved in endosomal membrane lysis stretch occupies residues 36–53 (SWGSLWSGIKNFGSTVKN). The tract at residues 48–74 (GSTVKNYGSKAWNSSTGQMLRDKLKEQ) is interaction with hexon protein. A Nuclear export signal motif is present at residues 67-76 (LRDKLKEQNF). The segment at 103-148 (INSKLDPRPPVEEPPPAVETVSPEGRGEKRPRPDREETLVTQIDEP) is disordered. Ser-124 is modified (phosphoserine; by host). The span at 127–140 (GRGEKRPRPDREET) shows a compositional bias: basic and acidic residues. Residues 131-135 (KRPRP) carry the Nuclear localization signal motif. Residue Thr-143 is modified to Phosphothreonine; by host. Positions 148-151 (PPSY) match the PPXY motif motif. A Nuclear export signal motif is present at residues 231-242 (STLNSIVGLGVQ). The segment at 233-239 (LNSIVGL) is interaction with hexon protein. Residues 240 to 250 (GVQSLKRRRCF) form a binds to importin alpha/beta, involved in hexon nuclear import region. The Nuclear localization signal signature appears at 245–248 (KRRR).

Belongs to the adenoviridae protein VI family. As to quaternary structure, interacts with hexon protein; this interaction allows nuclear import of hexon trimers and possibly pre-capsid assembly. Interacts (via C-terminal NLS) with importin alpha/beta. Interacts (via PPxY motif) with host NEDD4 ubiquitine ligase; this interaction might play a role in virus intracellular transport during entry. Part of a complex composed of the core-capsid bridging protein, the endosome lysis protein VI and the hexon-linking protein VIII; these interactions bridge the virus core to the capsid. Interacts with peripentonal hexons; this interaction stabilizes the capsid by gluing two peripentonal hexons together and joining them with an adjacent group-of-nine hexon. In terms of assembly, heterodimer with the viral protease; disulfide-linked. Interacts with the viral protease. Ubiquitinated by Nedd4 following partial capsid disassembly; which might play a role in intracellular virus movement during entry. Post-translationally, contains the major nuclear import and export signals. Proteolytically removed during virion maturation. The processing of the C-terminus turns the precursor into a mature viral structural protein and abrogates its ability to promote hexon import and act as a potential chaperone protein.

The protein resides in the host nucleus. It is found in the host cytoplasm. The protein localises to the virion. In terms of biological role, during virus assembly, promotes hexon trimers nuclear import through nuclear pore complexes via an importin alpha/beta-dependent mechanism. By analogy to herpesviruses capsid assembly, might act as a chaperone to promote the formation of the icosahedral capsid. Functionally, structural component of the virion that provides increased stability to the particle shell through its interaction with the core-capsid bridging protein and the hexon-linking protein VIII. Fibers shedding during virus entry into host cell allows the endosome lysis protein to be exposed as a membrane-lytic peptide. Exhibits pH-independent membrane fragmentation activity and probably mediates viral rapid escape from host endosome via organellar membrane lysis. It is not clear if it then remains partially associated with the capsid and involved in the intracellular microtubule-dependent transport of capsid to the nucleus, or if it is lost during endosomal penetration. Its function is as follows. Cofactor that activates the viral protease. Binds to viral protease in a 1:1 ratio. The chain is Pre-protein VI from Homo sapiens (Human).